The following is a 173-amino-acid chain: HTH-type transcriptional regulator IscR (173 aa).

The HTH rrf2-type domain maps to 2–131 (RLTSKGRYAV…NNITLGELMM (130 aa)). The H-T-H motif DNA-binding region spans 28–51 (LADISERQGISLSYLEQLFSKLRK). [2Fe-2S] cluster is bound by residues Cys92, Cys98, and Cys104.

[2Fe-2S] cluster serves as cofactor.

Regulates the transcription of several operons and genes involved in the biogenesis of Fe-S clusters and Fe-S-containing proteins. This chain is HTH-type transcriptional regulator IscR, found in Vibrio cholerae serotype O1 (strain ATCC 39315 / El Tor Inaba N16961).